A 209-amino-acid polypeptide reads, in one-letter code: Ribosome maturation factor RimP (209 aa).

The protein belongs to the RimP family.

The protein localises to the cytoplasm. Its function is as follows. Required for maturation of 30S ribosomal subunits. This chain is Ribosome maturation factor RimP, found in Bartonella bacilliformis (strain ATCC 35685 / KC583 / Herrer 020/F12,63).